The chain runs to 29 residues: Small ribosomal subunit protein uS7 (29 aa).

A disordered region spans residues 1 to 29 (ELIGAANRDTKSFSINRKDAKERVAKAAR). Over residues 8–29 (RDTKSFSINRKDAKERVAKAAR) the composition is skewed to basic and acidic residues.

It belongs to the universal ribosomal protein uS7 family. As to quaternary structure, part of the 30S ribosomal subunit.

One of the primary rRNA binding proteins, it binds directly to 16S rRNA where it nucleates assembly of the head domain of the 30S subunit. Is located at the subunit interface close to the decoding center. The protein is Small ribosomal subunit protein uS7 (rps7) of Methanosarcina thermophila.